The primary structure comprises 647 residues: Transcriptional repressor XBP1 (647 aa).

Polar residues-rich tracts occupy residues 138–148 (SNKTPVSASPT) and 156–170 (STASRENATSSLTKN). Disordered regions lie at residues 138–170 (SNKTPVSASPTKQEKKALSTASRENATSSLTKN) and 264–295 (LLSSSTSSPPKRRTSTGSTFLDANASSSSTSS). Over residues 264-282 (LLSSSTSSPPKRRTSTGST) the composition is skewed to low complexity. The HTH APSES-type domain maps to 282 to 395 (TFLDANASSS…PDFPKDCESW (114 aa)). The H-T-H motif DNA-binding region spans 318–339 (CQSYKDFLINELGPDQIDLPNL). Residues 425-434 (TNFTSTAVAR) show a composition bias toward low complexity. Disordered regions lie at residues 425–455 (TNFTSTAVARPRQKPRPRPRQRSTSMSHSKA), 485–508 (KKNSKRQKSSTYTSQTSSPIGPRD), and 612–647 (QNQRPAHNTNTNMDTSFSPRANNSLNNFKFKTNSKQ). Residues 435 to 445 (PRQKPRPRPRQ) show a composition bias toward basic residues. Positions 493-502 (SSTYTSQTSS) are enriched in low complexity.

It is found in the nucleus. In terms of biological role, transcriptional repressor which binds to the consensus sequence 5'-GCCTCGA[G/A]G[C/A]-3'. Represses CLN1 transcription. This Saccharomyces cerevisiae (strain ATCC 204508 / S288c) (Baker's yeast) protein is Transcriptional repressor XBP1 (XBP1).